The chain runs to 215 residues: ATP-dependent dethiobiotin synthetase BioD (215 aa).

13–18 provides a ligand contact to ATP; that stretch reads DIGKTV. Thr17 lines the Mg(2+) pocket. Residue Lys38 is part of the active site. Thr42 provides a ligand contact to substrate. ATP contacts are provided by residues Asp50, 115–118, and 175–176; these read EGAG and NH. Mg(2+) is bound by residues Asp50 and Glu115.

Belongs to the dethiobiotin synthetase family. In terms of assembly, homodimer. Requires Mg(2+) as cofactor.

The protein localises to the cytoplasm. The enzyme catalyses (7R,8S)-7,8-diammoniononanoate + CO2 + ATP = (4R,5S)-dethiobiotin + ADP + phosphate + 3 H(+). It functions in the pathway cofactor biosynthesis; biotin biosynthesis; biotin from 7,8-diaminononanoate: step 1/2. In terms of biological role, catalyzes a mechanistically unusual reaction, the ATP-dependent insertion of CO2 between the N7 and N8 nitrogen atoms of 7,8-diaminopelargonic acid (DAPA, also called 7,8-diammoniononanoate) to form a ureido ring. In Neisseria meningitidis serogroup B (strain ATCC BAA-335 / MC58), this protein is ATP-dependent dethiobiotin synthetase BioD.